A 1114-amino-acid chain; its full sequence is Putative surface protein SAV2496/SAV2497 (1114 aa).

An N-terminal signal peptide occupies residues 1–50; it reads MRDKKGPVNKRVDFLSNKLNKYSIRKFTVGTASILIGSLMYLGTQQEAEA. Disordered stretches follow at residues 76-116, 440-473, and 496-1088; these read TNKD…EDTP, KFNPDLAPGTEKVTREGQKGEKTITTPTLKNPLT, and EYGP…TGLE. Basic and acidic residues-rich tracts occupy residues 96 to 116, 451 to 461, 505 to 523, 554 to 570, and 579 to 589; these read DTIEHEASVKAEDISKKEDTP, KVTREGQKGEK, GHRDEFDPKLPTGEKEEVP, and SIVEKEEIPFEKERKFN. The region spanning 419–501 is the G5 1 domain; it reads SAKNNNRIRK…NELTEYGPET (83 aa). Residues 547-628 enclose the G5 2 domain; sequence YGPVKGDSIV…NELTEYGPET (82 aa). Positions 590 to 604 are enriched in low complexity; sequence TTTPTLKNPLTGEII. Composition is skewed to basic and acidic residues over residues 605–618, 632–650, 681–697, 706–716, 733–746, 760–778, 809–825, 834–844, 861–874, 918–929, and 946–965; these read SKGESKEEITKDPI, GHRDEFDPKLPTGEKEEVP, SIVEKEEIPFKKERKFN, KVTREGQKGEK, SIVEKEEIPFEKERKFN, SKGESKEEITKDPV, KVIEEPVDDVIK, and FETKREFNPKLQPGEERVKQ. The 83-residue stretch at 674–756 folds into the G5 3 domain; that stretch reads YGPVKGDSIV…NELTEYGPET (83 aa). One can recognise a G5 4 domain in the interval 802–884; that stretch reads YGPVKGDSIV…NELTEFGGEK (83 aa). In terms of domain architecture, G5 5 spans 930–1012; it reads HGPKTGTPET…DKIVEFGGEK (83 aa). The span at 968-982 shows a compositional bias: polar residues; it reads QPGSKTITTPITVNP. Residues 996–1026 show a composition bias toward basic and acidic residues; sequence EITKQPVDKIVEFGGEKPKDPKGPENPEKPS. An LPXTG sorting signal motif is present at residues 1082–1086; that stretch reads LPKTG. A Pentaglycyl murein peptidoglycan amidated threonine modification is found at Thr-1085. The propeptide at 1086–1114 is removed by sortase; it reads GLESTQKGLIFSSIIGIAGLMLLARRRKN.

The protein resides in the secreted. The protein localises to the cell wall. This is Putative surface protein SAV2496/SAV2497 from Staphylococcus aureus (strain Mu50 / ATCC 700699).